Consider the following 306-residue polypeptide: Non-specific ribonucleoside hydrolase RihC (306 aa).

H235 is an active-site residue.

The protein belongs to the IUNH family. RihC subfamily.

Its function is as follows. Hydrolyzes both purine and pyrimidine ribonucleosides with a broad-substrate specificity. This is Non-specific ribonucleoside hydrolase RihC from Salmonella agona (strain SL483).